Consider the following 240-residue polypeptide: 7-cyano-7-deazaguanine synthase (240 aa).

Residue 18–28 participates in ATP binding; it reads FSGGQDSTTCL. The Zn(2+) site is built by C197, C206, C209, and C212.

This sequence belongs to the QueC family. The cofactor is Zn(2+).

It carries out the reaction 7-carboxy-7-deazaguanine + NH4(+) + ATP = 7-cyano-7-deazaguanine + ADP + phosphate + H2O + H(+). It functions in the pathway purine metabolism; 7-cyano-7-deazaguanine biosynthesis. Its function is as follows. Catalyzes the ATP-dependent conversion of 7-carboxy-7-deazaguanine (CDG) to 7-cyano-7-deazaguanine (preQ(0)). In Shewanella baltica (strain OS223), this protein is 7-cyano-7-deazaguanine synthase.